A 506-amino-acid polypeptide reads, in one-letter code: Dipeptide and tripeptide permease A (506 aa).

The Cytoplasmic segment spans residues M1–R36. Residues F37–S57 form a helical membrane-spanning segment. The Periplasmic segment spans residues E58–S61. Residues I62–L82 traverse the membrane as a helical segment. At G83 to R91 the chain is on the cytoplasmic side. 2 consecutive transmembrane segments (helical) span residues V92–H112 and S113–A133. Residues N134–T155 lie on the Cytoplasmic side of the membrane. The helical transmembrane segment at M156–A176 threads the bilayer. The Periplasmic segment spans residues A177–G180. A helical transmembrane segment spans residues W181–F201. Over C202–K222 the chain is Cytoplasmic. Residues L223–N243 traverse the membrane as a helical segment. At Q244 to R248 the chain is on the periplasmic side. The helical transmembrane segment at W249–V269 threads the bilayer. Topologically, residues S270–K276 are cytoplasmic. A helical membrane pass occupies residues M277 to M297. At P298 to Q322 the chain is on the periplasmic side. Residues Y323 to N343 form a helical membrane-spanning segment. The Cytoplasmic segment spans residues K344–K354. Residues F355 to M375 traverse the membrane as a helical segment. Over A376–N385 the chain is Periplasmic. A helical transmembrane segment spans residues W386 to L406. Topologically, residues A407–R416 are cytoplasmic. The chain crosses the membrane as a helical span at residues L417 to G437. Topologically, residues Y438 to N461 are periplasmic. A helical membrane pass occupies residues V462–P482. The Cytoplasmic segment spans residues K483–A506.

This sequence belongs to the major facilitator superfamily. Proton-dependent oligopeptide transporter (POT/PTR) (TC 2.A.17) family. DtpA subfamily.

The protein localises to the cell inner membrane. Proton-dependent permease that transports di- and tripeptides. In Pectobacterium carotovorum subsp. carotovorum (strain PC1), this protein is Dipeptide and tripeptide permease A.